The chain runs to 473 residues: Siroheme synthase (473 aa).

The segment at 1–203 is precorrin-2 dehydrogenase /sirohydrochlorin ferrochelatase; the sequence is MQYLPIFTKL…GDTQAAEQQL (203 aa). Residues 22–23 and 43–44 each bind NAD(+); these read DV and PK. Serine 128 is modified (phosphoserine). The segment at 215–473 is uroporphyrinogen-III C-methyltransferase; sequence GEVYVVGAGP…SFAQPLTDVA (259 aa). Residue proline 224 coordinates S-adenosyl-L-methionine. Catalysis depends on aspartate 247, which acts as the Proton acceptor. The Proton donor role is filled by lysine 269. S-adenosyl-L-methionine is bound by residues 300 to 302, isoleucine 305, 330 to 331, methionine 382, and glycine 411; these read GGD and TA.

This sequence in the N-terminal section; belongs to the precorrin-2 dehydrogenase / sirohydrochlorin ferrochelatase family. The protein in the C-terminal section; belongs to the precorrin methyltransferase family.

The enzyme catalyses uroporphyrinogen III + 2 S-adenosyl-L-methionine = precorrin-2 + 2 S-adenosyl-L-homocysteine + H(+). It carries out the reaction precorrin-2 + NAD(+) = sirohydrochlorin + NADH + 2 H(+). It catalyses the reaction siroheme + 2 H(+) = sirohydrochlorin + Fe(2+). Its pathway is cofactor biosynthesis; adenosylcobalamin biosynthesis; precorrin-2 from uroporphyrinogen III: step 1/1. The protein operates within cofactor biosynthesis; adenosylcobalamin biosynthesis; sirohydrochlorin from precorrin-2: step 1/1. It participates in porphyrin-containing compound metabolism; siroheme biosynthesis; precorrin-2 from uroporphyrinogen III: step 1/1. It functions in the pathway porphyrin-containing compound metabolism; siroheme biosynthesis; siroheme from sirohydrochlorin: step 1/1. Its pathway is porphyrin-containing compound metabolism; siroheme biosynthesis; sirohydrochlorin from precorrin-2: step 1/1. Functionally, multifunctional enzyme that catalyzes the SAM-dependent methylations of uroporphyrinogen III at position C-2 and C-7 to form precorrin-2 via precorrin-1. Then it catalyzes the NAD-dependent ring dehydrogenation of precorrin-2 to yield sirohydrochlorin. Finally, it catalyzes the ferrochelation of sirohydrochlorin to yield siroheme. The polypeptide is Siroheme synthase (Pseudoalteromonas translucida (strain TAC 125)).